We begin with the raw amino-acid sequence, 362 residues long: Chalcone synthase A (362 aa).

C168 is an active-site residue.

Belongs to the thiolase-like superfamily. Chalcone/stilbene synthases family.

The catalysed reaction is (E)-4-coumaroyl-CoA + 3 malonyl-CoA + 3 H(+) = 2',4,4',6'-tetrahydroxychalcone + 3 CO2 + 4 CoA. It functions in the pathway secondary metabolite biosynthesis; flavonoid biosynthesis. The primary product of this enzyme is 4,2',4',6'-tetrahydroxychalcone (also termed naringenin-chalcone or chalcone) which can under specific conditions spontaneously isomerize into naringenin. In Ipomoea platensis (Morning glory), this protein is Chalcone synthase A (CHSA).